A 262-amino-acid chain; its full sequence is Zinc finger protein 138 (262 aa).

A C2H2-type 1 zinc finger spans residues 110 to 132; that stretch reads FRCKECDKSLCMLSRLTQHKKIH. The C2H2-type 2; degenerate zinc-finger motif lies at 138 to 160; sequence YKCEECGKTFNWSTNLSKPKKIH. Residues 166–188 form a C2H2-type 3; degenerate zinc finger; it reads YKCEVCGKAFHQSSILTKHKIIR. A C2H2-type 4 zinc finger spans residues 194 to 216; the sequence is YKCAHCGKAFKQSSHLTRHKIIH. Residues 222 to 244 form a C2H2-type 5; degenerate zinc finger; it reads YKCEQCGKVFKQSPTLTKHQIIY. The segment at 250–262 adopts a C2H2-type 6; degenerate zinc-finger fold; sequence YKCEECGKAFNLS.

This sequence belongs to the krueppel C2H2-type zinc-finger protein family.

The protein localises to the nucleus. Functionally, may be involved in transcriptional regulation as a repressor. In Homo sapiens (Human), this protein is Zinc finger protein 138 (ZNF138).